The following is a 185-amino-acid chain: Elongation factor P (185 aa).

It belongs to the elongation factor P family.

The protein localises to the cytoplasm. It functions in the pathway protein biosynthesis; polypeptide chain elongation. Its function is as follows. Involved in peptide bond synthesis. Stimulates efficient translation and peptide-bond synthesis on native or reconstituted 70S ribosomes in vitro. Probably functions indirectly by altering the affinity of the ribosome for aminoacyl-tRNA, thus increasing their reactivity as acceptors for peptidyl transferase. The polypeptide is Elongation factor P (Syntrophomonas wolfei subsp. wolfei (strain DSM 2245B / Goettingen)).